Consider the following 509-residue polypeptide: tRNA-2-methylthio-N(6)-dimethylallyladenosine synthase (509 aa).

The segment covering 1–15 (MNEQQRLASQQANAS) has biased composition (polar residues). The disordered stretch occupies residues 1 to 22 (MNEQQRLASQQANASTKKEEKD). The region spanning 66 to 184 (RKFYIRTYGC…LPYILKDAMF (119 aa)) is the MTTase N-terminal domain. Residues Cys-75, Cys-111, Cys-145, Cys-221, Cys-225, and Cys-228 each coordinate [4Fe-4S] cluster. Positions 207–437 (RRGDIKAWVN…NELVNEFSAK (231 aa)) constitute a Radical SAM core domain. Residues 440-503 (KKYEGQIVEV…TWSLNGELVE (64 aa)) enclose the TRAM domain.

It belongs to the methylthiotransferase family. MiaB subfamily. Monomer. The cofactor is [4Fe-4S] cluster.

It localises to the cytoplasm. It carries out the reaction N(6)-dimethylallyladenosine(37) in tRNA + (sulfur carrier)-SH + AH2 + 2 S-adenosyl-L-methionine = 2-methylsulfanyl-N(6)-dimethylallyladenosine(37) in tRNA + (sulfur carrier)-H + 5'-deoxyadenosine + L-methionine + A + S-adenosyl-L-homocysteine + 2 H(+). In terms of biological role, catalyzes the methylthiolation of N6-(dimethylallyl)adenosine (i(6)A), leading to the formation of 2-methylthio-N6-(dimethylallyl)adenosine (ms(2)i(6)A) at position 37 in tRNAs that read codons beginning with uridine. The protein is tRNA-2-methylthio-N(6)-dimethylallyladenosine synthase of Bacillus cytotoxicus (strain DSM 22905 / CIP 110041 / 391-98 / NVH 391-98).